A 238-amino-acid polypeptide reads, in one-letter code: MRTNGRGPRDLRNVVLEPGVSKHAEGSCLARFGDTHVLCTASVDEKVPPHVYGTGAGWVTAEYGMLPRSTHERMAREAARGKQGGRTLEIQRLIGRALRAAVDLRALGTRTVTLDCDVIQADGGTRTAAITGGYVALALALRGLQQRKTLSRNPLARSVAAVSVGLVEGEVCVDLDYGEDSTAEVDMNVVATGDGALVEVQGTAEGKPFPRSDLDRMVDAALEAIGRLKERQEQALRG.

Phosphate is bound by residues R86 and 124–126; that span reads GTR.

The protein belongs to the RNase PH family. In terms of assembly, homohexameric ring arranged as a trimer of dimers.

It catalyses the reaction tRNA(n+1) + phosphate = tRNA(n) + a ribonucleoside 5'-diphosphate. Phosphorolytic 3'-5' exoribonuclease that plays an important role in tRNA 3'-end maturation. Removes nucleotide residues following the 3'-CCA terminus of tRNAs; can also add nucleotides to the ends of RNA molecules by using nucleoside diphosphates as substrates, but this may not be physiologically important. Probably plays a role in initiation of 16S rRNA degradation (leading to ribosome degradation) during starvation. The protein is Ribonuclease PH of Anaeromyxobacter sp. (strain Fw109-5).